The chain runs to 150 residues: D-aminoacyl-tRNA deacylase (150 aa).

Residues 136 to 137 (GP) carry the Gly-cisPro motif, important for rejection of L-amino acids motif.

This sequence belongs to the DTD family. In terms of assembly, homodimer.

It is found in the cytoplasm. The enzyme catalyses glycyl-tRNA(Ala) + H2O = tRNA(Ala) + glycine + H(+). It catalyses the reaction a D-aminoacyl-tRNA + H2O = a tRNA + a D-alpha-amino acid + H(+). In terms of biological role, an aminoacyl-tRNA editing enzyme that deacylates mischarged D-aminoacyl-tRNAs. Also deacylates mischarged glycyl-tRNA(Ala), protecting cells against glycine mischarging by AlaRS. Acts via tRNA-based rather than protein-based catalysis; rejects L-amino acids rather than detecting D-amino acids in the active site. By recycling D-aminoacyl-tRNA to D-amino acids and free tRNA molecules, this enzyme counteracts the toxicity associated with the formation of D-aminoacyl-tRNA entities in vivo and helps enforce protein L-homochirality. The sequence is that of D-aminoacyl-tRNA deacylase from Staphylococcus haemolyticus (strain JCSC1435).